Consider the following 191-residue polypeptide: MNLILFGPPAAGKGTQAKRLVTERGMVQLSTGDMLRAAIASGSELGQRVKGVLDRGELVTDEIVIALIEDRLPEAEAAGGAIFDGFPRTVAQAEALDKMLAARGQKIDVVLRLKVDEPALIERIKKRFEEQGRPDDNPEVFVTRLAAYNAQTAPLLPYYEGQGKLTELDGMGTVEAVAASIDSALEPVAAG.

10 to 15 (AAGKGT) provides a ligand contact to ATP. Positions 30 to 59 (STGDMLRAAIASGSELGQRVKGVLDRGELV) are NMP. AMP-binding positions include T31, R36, 57-59 (ELV), 85-88 (GFPR), and Q92. An LID region spans residues 126–136 (KRFEEQGRPDD). Residue R127 coordinates ATP. AMP is bound by residues R133 and R144. An ATP-binding site is contributed by G172.

The protein belongs to the adenylate kinase family. As to quaternary structure, monomer.

Its subcellular location is the cytoplasm. It catalyses the reaction AMP + ATP = 2 ADP. The protein operates within purine metabolism; AMP biosynthesis via salvage pathway; AMP from ADP: step 1/1. In terms of biological role, catalyzes the reversible transfer of the terminal phosphate group between ATP and AMP. Plays an important role in cellular energy homeostasis and in adenine nucleotide metabolism. The polypeptide is Adenylate kinase (Caulobacter vibrioides (strain ATCC 19089 / CIP 103742 / CB 15) (Caulobacter crescentus)).